The following is a 292-amino-acid chain: 2-(5''-triphosphoribosyl)-3'-dephosphocoenzyme-A synthase (292 aa).

The protein belongs to the CitG/MdcB family.

The catalysed reaction is 3'-dephospho-CoA + ATP = 2'-(5''-triphospho-alpha-D-ribosyl)-3'-dephospho-CoA + adenine. Catalyzes the formation of 2-(5''-triphosphoribosyl)-3'-dephosphocoenzyme-A, the precursor of the prosthetic group of the holo-acyl carrier protein (gamma chain) of citrate lyase, from ATP and dephospho-CoA. This Escherichia coli (strain SMS-3-5 / SECEC) protein is 2-(5''-triphosphoribosyl)-3'-dephosphocoenzyme-A synthase.